The following is a 219-amino-acid chain: MEAITTNGITLRRTVAAAQGDDALRAMGERITGALGPAVTDWSIAHGELTLIVQGSDIVYALTYLRDDPNCAFRCFIDICGVDYPQRARRFDVVYHLLSLRHNMRVRVKVQTDAATPVPSAIPVFPAANWFERETYDLYGILFSGHPDLRRLLTDYGFEGHPLRKDFPLTGFVEVRYDQDEARVVYEPVKLTQEFRNFDFLSPWEGTDYVLPGDEKKSS.

This sequence belongs to the complex I 30 kDa subunit family. As to quaternary structure, NDH-1 is composed of 14 different subunits. Subunits NuoB, C, D, E, F, and G constitute the peripheral sector of the complex.

The protein resides in the cell inner membrane. The enzyme catalyses a quinone + NADH + 5 H(+)(in) = a quinol + NAD(+) + 4 H(+)(out). Functionally, NDH-1 shuttles electrons from NADH, via FMN and iron-sulfur (Fe-S) centers, to quinones in the respiratory chain. The immediate electron acceptor for the enzyme in this species is believed to be ubiquinone. Couples the redox reaction to proton translocation (for every two electrons transferred, four hydrogen ions are translocated across the cytoplasmic membrane), and thus conserves the redox energy in a proton gradient. In Methylorubrum populi (strain ATCC BAA-705 / NCIMB 13946 / BJ001) (Methylobacterium populi), this protein is NADH-quinone oxidoreductase subunit C.